The following is a 598-amino-acid chain: UvrABC system protein C (598 aa).

The GIY-YIG domain occupies 14 to 91 (DSPGCYLHKD…IQKNMPKYNI (78 aa)). A UVR domain is found at 196–231 (DKIIEDLRSKMLAASKEMAFERAAEYRDLISGIATM).

Belongs to the UvrC family. In terms of assembly, interacts with UvrB in an incision complex.

Its subcellular location is the cytoplasm. Functionally, the UvrABC repair system catalyzes the recognition and processing of DNA lesions. UvrC both incises the 5' and 3' sides of the lesion. The N-terminal half is responsible for the 3' incision and the C-terminal half is responsible for the 5' incision. The sequence is that of UvrABC system protein C from Streptococcus pyogenes serotype M1.